Here is a 396-residue protein sequence, read N- to C-terminus: Anaerobic glycerol-3-phosphate dehydrogenase subunit C (396 aa).

4Fe-4S ferredoxin-type domains are found at residues 2 to 29 (NDTS…PGYP) and 45 to 76 (DGAL…GDII). [4Fe-4S] cluster-binding residues include cysteine 9, cysteine 12, cysteine 15, cysteine 19, cysteine 56, cysteine 59, cysteine 62, and cysteine 66.

As to quaternary structure, composed of a catalytic GlpA/B dimer and of GlpC.

The protein resides in the cell inner membrane. It functions in the pathway polyol metabolism; glycerol degradation via glycerol kinase pathway; glycerone phosphate from sn-glycerol 3-phosphate (anaerobic route): step 1/1. Functionally, electron transfer protein; may also function as the membrane anchor for the GlpAB dimer. This is Anaerobic glycerol-3-phosphate dehydrogenase subunit C (glpC) from Escherichia coli O157:H7.